A 209-amino-acid chain; its full sequence is Ribosomal RNA large subunit methyltransferase E (209 aa).

S-adenosyl-L-methionine is bound by residues Gly-63, Trp-65, Asp-83, Asp-99, and Asp-124. Residue Lys-164 is the Proton acceptor of the active site.

This sequence belongs to the class I-like SAM-binding methyltransferase superfamily. RNA methyltransferase RlmE family.

The protein localises to the cytoplasm. It catalyses the reaction uridine(2552) in 23S rRNA + S-adenosyl-L-methionine = 2'-O-methyluridine(2552) in 23S rRNA + S-adenosyl-L-homocysteine + H(+). Functionally, specifically methylates the uridine in position 2552 of 23S rRNA at the 2'-O position of the ribose in the fully assembled 50S ribosomal subunit. The chain is Ribosomal RNA large subunit methyltransferase E from Yersinia pseudotuberculosis serotype O:1b (strain IP 31758).